The primary structure comprises 406 residues: GTPase Obg (406 aa).

An Obg domain is found at 1 to 159 (MRFVDEAVIT…REIRLELKVL (159 aa)). The disordered stretch occupies residues 120–143 (GGEGGLGNTHFKSSTNRAPRKCTT). The region spanning 160 to 333 (ADVGLLGMPN…VVYYLMDQIE (174 aa)) is the OBG-type G domain. Residues 166 to 173 (GMPNAGKS), 191 to 195 (FTTMV), 213 to 216 (DIPG), 283 to 286 (NKLD), and 314 to 316 (SGL) contribute to the GTP site. Mg(2+)-binding residues include serine 173 and threonine 193. Positions 381 to 406 (ESMMDDDDDFDDDEDDGDVESIYVRD) are disordered. The span at 383-399 (MMDDDDDFDDDEDDGDV) shows a compositional bias: acidic residues.

This sequence belongs to the TRAFAC class OBG-HflX-like GTPase superfamily. OBG GTPase family. Monomer. The cofactor is Mg(2+).

It is found in the cytoplasm. An essential GTPase which binds GTP, GDP and possibly (p)ppGpp with moderate affinity, with high nucleotide exchange rates and a fairly low GTP hydrolysis rate. Plays a role in control of the cell cycle, stress response, ribosome biogenesis and in those bacteria that undergo differentiation, in morphogenesis control. This chain is GTPase Obg, found in Acinetobacter baumannii (strain SDF).